The primary structure comprises 161 residues: Nucleotide-binding protein Reut_A2760 (161 aa).

This sequence belongs to the YajQ family.

Functionally, nucleotide-binding protein. The chain is Nucleotide-binding protein Reut_A2760 from Cupriavidus pinatubonensis (strain JMP 134 / LMG 1197) (Cupriavidus necator (strain JMP 134)).